A 227-amino-acid chain; its full sequence is Mitochondrial cardiolipin hydrolase (227 aa).

Residues 1–14 are Mitochondrial intermembrane-facing; that stretch reads MDVFKQMSFKELMK. A helical transmembrane segment spans residues 15-33; sequence VLGLGTVAFVLGVEWLNWL. The Cytoplasmic portion of the chain corresponds to 34-227; that stretch reads TRRLRDSRGP…LQSKNGQIKK (194 aa). Residues 153 to 180 enclose the PLD phosphodiesterase domain; it reads SAVHMHHKFALVDGRKLISGSLNWTLTA. Active-site residues include His158, Lys160, and Asp165.

This sequence belongs to the phospholipase D family. MitoPLD/Zucchini subfamily. In terms of assembly, homodimer.

It is found in the mitochondrion outer membrane. It catalyses the reaction a cardiolipin + H2O = a 1,2-diacyl-sn-glycero-3-phospho-(1'-sn-glycerol) + a 1,2-diacyl-sn-glycero-3-phosphate + H(+). Functionally, presents phospholipase and nuclease activities, depending on the different physiological conditions. Plays a key role in mitochondrial fusion and fission via its phospholipase activity. In its phospholipase role, it uses the mitochondrial lipid cardiolipin as substrate to generate phosphatidate (PA or 1,2-diacyl-sn-glycero-3-phosphate), a second messenger signaling lipid. Production of PA facilitates Mitofusin-mediated fusion, whereas the cleavage of PA by the Lipin family of phosphatases produces diacylgycerol (DAG) which promotes mitochondrial fission. Regulates mitochondrial shape through facilitating mitochondrial fusion. During spermatogenesis, plays a critical role in PIWI-interacting RNA (piRNA) biogenesis. piRNAs provide essential protection against the activity of mobile genetic elements. piRNA-mediated transposon silencing is thus critical for maintaining genome stability, in particular in germline cells when transposons are mobilized as a consequence of wide-spread genomic demethylation. Has been shown to be a backbone-non-specific, single strand-specific nuclease, cleaving either RNA or DNA substrates with similar affinity. Produces 5' phosphate and 3' hydroxyl termini, suggesting it could directly participate in the processing of primary piRNA transcripts. Has been proposed to act as a cardiolipin hydrolase to generate phosphatidic acid at mitochondrial surface. Although it cannot be excluded that it can act as a phospholipase in some circumstances, this activity could not be confirmed. The protein is Mitochondrial cardiolipin hydrolase (pld6) of Danio rerio (Zebrafish).